Reading from the N-terminus, the 137-residue chain is MRKLIYIIVGIAGILGALSRYYLGLTIHEFWHHTFPLATLLINLVGCFLLAWLTTYIAQRNILPAEIITGIGTGFIGSFTTFSTFSVETIQLINHSEWSIAFLYVSCSILGGLIMSGLGYTLGDFLIKKHLTEGDHL.

4 helical membrane-spanning segments follow: residues 4–24, 37–57, 62–82, and 100–120; these read LIYIIVGIAGILGALSRYYLG, LATLLINLVGCFLLAWLTTYI, ILPAEIITGIGTGFIGSFTTF, and IAFLYVSCSILGGLIMSGLGY. The Na(+) site is built by glycine 77 and threonine 80.

This sequence belongs to the fluoride channel Fluc/FEX (TC 1.A.43) family.

Its subcellular location is the cell membrane. The enzyme catalyses fluoride(in) = fluoride(out). Na(+) is not transported, but it plays an essential structural role and its presence is essential for fluoride channel function. Functionally, fluoride-specific ion channel. Important for reducing fluoride concentration in the cell, thus reducing its toxicity. In Bacillus cereus (strain ATCC 10987 / NRS 248), this protein is Fluoride-specific ion channel FluC 1.